The sequence spans 278 residues: Tryptophan 2,3-dioxygenase (278 aa).

Substrate is bound by residues 47–51, Tyr110, and Arg114; that span reads FIIQH. His236 is a binding site for heme. Position 250 (Thr250) interacts with substrate.

The protein belongs to the tryptophan 2,3-dioxygenase family. As to quaternary structure, homotetramer. Heme serves as cofactor.

The enzyme catalyses L-tryptophan + O2 = N-formyl-L-kynurenine. The protein operates within amino-acid degradation; L-tryptophan degradation via kynurenine pathway; L-kynurenine from L-tryptophan: step 1/2. Its function is as follows. Heme-dependent dioxygenase that catalyzes the oxidative cleavage of the L-tryptophan (L-Trp) pyrrole ring and converts L-tryptophan to N-formyl-L-kynurenine. Catalyzes the oxidative cleavage of the indole moiety. This chain is Tryptophan 2,3-dioxygenase, found in Ruegeria pomeroyi (strain ATCC 700808 / DSM 15171 / DSS-3) (Silicibacter pomeroyi).